We begin with the raw amino-acid sequence, 263 residues long: Endonuclease 8 (263 aa).

Pro-2 functions as the Schiff-base intermediate with DNA in the catalytic mechanism. Glu-3 acts as the Proton donor in catalysis. Lys-53 (proton donor; for beta-elimination activity) is an active-site residue. Residues Gln-70, Arg-125, and Asn-169 each contribute to the DNA site. The segment at 229–263 (KVFHRDGELCERCGGIIEKTTLSSRPFYWCPGCQH) adopts an FPG-type zinc-finger fold. Arg-253 serves as the catalytic Proton donor; for delta-elimination activity.

The protein belongs to the FPG family. It depends on Zn(2+) as a cofactor.

It catalyses the reaction 2'-deoxyribonucleotide-(2'-deoxyribose 5'-phosphate)-2'-deoxyribonucleotide-DNA = a 3'-end 2'-deoxyribonucleotide-(2,3-dehydro-2,3-deoxyribose 5'-phosphate)-DNA + a 5'-end 5'-phospho-2'-deoxyribonucleoside-DNA + H(+). Involved in base excision repair of DNA damaged by oxidation or by mutagenic agents. Acts as a DNA glycosylase that recognizes and removes damaged bases. Has a preference for oxidized pyrimidines, such as thymine glycol, 5,6-dihydrouracil and 5,6-dihydrothymine. Has AP (apurinic/apyrimidinic) lyase activity and introduces nicks in the DNA strand. Cleaves the DNA backbone by beta-delta elimination to generate a single-strand break at the site of the removed base with both 3'- and 5'-phosphates. In Escherichia coli O157:H7, this protein is Endonuclease 8.